The primary structure comprises 281 residues: Pantothenate synthetase (281 aa).

An ATP-binding site is contributed by 26-33; that stretch reads MGYLHQGH. The active-site Proton donor is H33. Q57 is a (R)-pantoate binding site. Position 57 (Q57) interacts with beta-alanine. 143–146 contacts ATP; that stretch reads GQKD. A (R)-pantoate-binding site is contributed by Q149. ATP-binding positions include V172 and 180–183; that span reads LSSR.

The protein belongs to the pantothenate synthetase family. In terms of assembly, homodimer.

The protein localises to the cytoplasm. It catalyses the reaction (R)-pantoate + beta-alanine + ATP = (R)-pantothenate + AMP + diphosphate + H(+). Its pathway is cofactor biosynthesis; (R)-pantothenate biosynthesis; (R)-pantothenate from (R)-pantoate and beta-alanine: step 1/1. Its function is as follows. Catalyzes the condensation of pantoate with beta-alanine in an ATP-dependent reaction via a pantoyl-adenylate intermediate. This is Pantothenate synthetase from Chloroflexus aurantiacus (strain ATCC 29366 / DSM 635 / J-10-fl).